A 709-amino-acid polypeptide reads, in one-letter code: Leucine-rich repeat-containing protein 4B (709 aa).

Positions 1–38 (MAQAHIRGSPCPLLPPGRMSWPHGALLLLWLFSPPLRA) are cleaved as a signal peptide. The 39-residue stretch at 50-88 (GGGSPPATSCPAACSCSNQASRVICTRRELAEVPASIPV) folds into the LRRNT domain. LRR repeat units lie at residues 89–110 (NTRY…TFKH), 113–134 (HLEI…AFNG), 137–158 (SLNT…AFEY), 161–182 (KLRE…AFNR), 185–207 (SLRR…AFEG), 210–231 (NLRY…TALV), 232–253 (RLEE…SFQG), 256–277 (SLRK…AFDD), and 280–301 (SLEE…LFTP). N-linked (GlcNAc...) asparagine glycosylation occurs at asparagine 226. N-linked (GlcNAc...) asparagine glycans are attached at residues asparagine 285, asparagine 335, asparagine 376, asparagine 402, asparagine 424, asparagine 427, asparagine 446, and asparagine 454. An LRRCT domain is found at 313–365 (NPWHCNCDVLWLSWWLKETVPSNTTCCARCHAPAGLKGRYIGELDQSHFTCYA). Positions 366–454 (PVIVEPPTDL…GNTTASATLN (89 aa)) constitute an Ig-like C2-type domain. The cysteines at positions 387 and 438 are disulfide-linked. Residues 496–552 (TQPGEEAQQPRGTEKEPPGPTTDGAWGGGRPDAAAPASASTTAPAPRSSRPTEKAFT) form a disordered region. The segment covering 528–544 (AAAPASASTTAPAPRSS) has biased composition (low complexity). The helical transmembrane segment at 575 to 595 (IIIGCFVAITFMAAVMLVAFY) threads the bilayer. Serine 689 is modified (phosphoserine).

In terms of assembly, interacts with PTPRF. Interacts with DLG4. N-glycosylated. O-glycosylated; contains sialic acid.

The protein localises to the membrane. Its subcellular location is the presynaptic cell membrane. Synaptic adhesion protein. Regulates the formation of excitatory synapses. The trans-synaptic adhesion between LRRC4B and PTPRF regulates the formation of excitatory synapses in a bidirectional manner. In Mus musculus (Mouse), this protein is Leucine-rich repeat-containing protein 4B (Lrrc4b).